We begin with the raw amino-acid sequence, 67 residues long: MPKMKTRKTAAKRFHVTGTGKIMRSKGMKSHLRRNKSARVLRQFDEMSQVAGVDRARIQKLIPYGVS.

The protein belongs to the bacterial ribosomal protein bL35 family.

The protein is Large ribosomal subunit protein bL35 of Dehalococcoides mccartyi (strain ATCC BAA-2100 / JCM 16839 / KCTC 5957 / BAV1).